The following is an 876-amino-acid chain: MMADGAAAGAGGSPSLRELRARMVAAANEIAKERRKQDVVNRVATHSSNIRSTFKPVIDGSMLKNDIKQRLARERREEKRRQQDANKETQLLEKERKTKLQYEKQMEERQRKLKERKEKEEQRRIAAEEKRHQKDEAQKEKFTAILYRTLERRRLADDYQQKRWSWGGSAMANSESKTANKRSASTEKLEQGTSALIRQMPLSSAGLQNSVAKRKTDKERSSSLNRRDSNLHSSTDKEQAERKPRVTGVTNYVMQYVTVPLRKCTSDELRAVMFPMSTMKIPPQTKVEESPLEKVETPPKASVDAPPQVNVEVFCNTSMEASPKAGVGMAPEVSTDSFPVVSVDVSPVVSTYDSEMSMDASPELSIEALPKVDLETVPKVSIVASPEASLEAPPEVSLEALPEVSVEAAPEGSLEAPPKGSAEVAPKESVKGSPKESMEASPEAMVKASPKTSLEASMEASPKAKARDAPKKSEMDKQALIPIAKKRLSSYTECYKWSSSPENACGLPSPISTNRQIQKNCPPSPLPLISKQSPQTSFPYKIMPIQHTLSVQSASSTVKKKKETVSKTTNRCEALSQRHMIYEESGNKSTAGIMNAEAATKILTELRRLAREQREKEEEERQREEMQQRVIKKSKDMAKEAVGGQAEDHLKLKDGQQQNETKKKKGWLDQEDQEAPLQKGDAKIKAQEEADKRKKEHERIMLQNLQERLERKKRIEEIMKRTRKTDVNASKVTETSSHDIYEEAEADNEESDKDSLNEMFPSAILNGTGSPTKFKMPFNNAKKMTHKLVFLEDGTSQVRKEPKTYFNGDLKNFRQKSMKDTSIQEVVSRPSSKRMTSHTTKTRKADETNTTSRSSAQTKSEGFHDILPKSSDTFRQ.

An N-acetylmethionine modification is found at Met1. A coiled-coil region spans residues 65–144 (NDIKQRLARE…DEAQKEKFTA (80 aa)). 2 disordered regions span residues 72–137 (ARER…KDEA) and 170–246 (AMAN…KPRV). Residues 171-183 (MANSESKTANKRS) show a composition bias toward polar residues. Ser185 carries the post-translational modification Phosphoserine. The span at 191 to 211 (QGTSALIRQMPLSSAGLQNSV) shows a compositional bias: polar residues. Positions 214–244 (RKTDKERSSSLNRRDSNLHSSTDKEQAERKP) are enriched in basic and acidic residues. The residue at position 322 (Ser322) is a Phosphoserine. Residues 407-475 (EAAPEGSLEA…ARDAPKKSEM (69 aa)) are disordered. The segment covering 425 to 438 (APKESVKGSPKESM) has biased composition (basic and acidic residues). Phosphoserine occurs at positions 441, 457, and 461. Basic and acidic residues predominate over residues 465 to 475 (KARDAPKKSEM). Residue Ser490 is modified to Phosphoserine. 3 disordered regions span residues 509-533 (SPIS…SKQS), 613-697 (QREK…KKEH), and 723-754 (RKTD…SDKD). The segment covering 510 to 521 (PISTNRQIQKNC) has biased composition (polar residues). Phosphoserine is present on Ser524. Coiled coils occupy residues 558–640 (VKKK…MAKE) and 689–724 (EADK…RTRK). Basic and acidic residues-rich tracts occupy residues 613 to 639 (QREK…DMAK) and 680 to 697 (GDAK…KKEH). Acidic residues predominate over residues 742-752 (EEAEADNEESD). A phosphoserine mark is found at Ser770 and Ser817. A disordered region spans residues 802–876 (PKTYFNGDLK…LPKSSDTFRQ (75 aa)). Residues 820-830 (DTSIQEVVSRP) show a composition bias toward polar residues. Residues 831–842 (SSKRMTSHTTKT) show a composition bias toward basic residues. At Ser832 the chain carries Phosphoserine. The span at 848-860 (TNTTSRSSAQTKS) shows a compositional bias: polar residues. The span at 861–876 (EGFHDILPKSSDTFRQ) shows a compositional bias: basic and acidic residues.

It belongs to the MAP7 family. As to quaternary structure, interacts (via N-terminus coiled coil domains) with tubulin and microtubules.

The protein resides in the cytoplasm. The protein localises to the cytoskeleton. It localises to the spindle. Functionally, promotes the assembly and stability of microtubules. The chain is MAP7 domain-containing protein 3 (MAP7D3) from Homo sapiens (Human).